The chain runs to 182 residues: Putative manganese efflux pump MntP (182 aa).

Transmembrane regions (helical) follow at residues 6–26 (TVLV…GVGT), 37–57 (LSFH…FVGS), 59–79 (AADL…LFIG), 104–126 (SSLV…SFGI), 131–149 (LFLS…TWGA), and 164–181 (METV…KLLL).

Belongs to the MntP (TC 9.B.29) family.

The protein resides in the cell inner membrane. Functionally, probably functions as a manganese efflux pump. This Syntrophobacter fumaroxidans (strain DSM 10017 / MPOB) protein is Putative manganese efflux pump MntP.